Here is a 227-residue protein sequence, read N- to C-terminus: MNIKSFLNNRLWKNNSSLVQLLGLCPVLAMTTNAINAIGLGMTTTLVLTITNTIISSFRKIIPKDLRIPIYMMIISSVVTSIEMLLHAYTFNLYQSLGIFIPLIVTNCIIVGRADLIAYKSSIVESFFDGIFIGLGSMFAMFAVGSIREILGNGTLFFGANKIISNIHSSVFFTLLDKKFTIILAVFPPGGFLILGFLIAIKNFIDLYYKKNTIKNIEQCSCSNKIK.

Transmembrane regions (helical) follow at residues 34–56, 68–88, 91–111, 127–147, and 181–201; these read AINA…TIIS, IPIY…LLHA, FNLY…CIIV, FFDG…VGSI, and TIIL…LIAI.

Belongs to the NqrDE/RnfAE family. The complex is composed of six subunits: RnfA, RnfB, RnfC, RnfD, RnfE and RnfG.

The protein resides in the cell inner membrane. Its function is as follows. Part of a membrane-bound complex that couples electron transfer with translocation of ions across the membrane. In Buchnera aphidicola subsp. Acyrthosiphon pisum (strain APS) (Acyrthosiphon pisum symbiotic bacterium), this protein is Ion-translocating oxidoreductase complex subunit E.